Reading from the N-terminus, the 315-residue chain is Acetaldehyde dehydrogenase (315 aa).

13–16 (SGNI) is a binding site for NAD(+). Cysteine 131 acts as the Acyl-thioester intermediate in catalysis. NAD(+) is bound by residues 163–171 (SAGPGTRAN) and asparagine 290.

This sequence belongs to the acetaldehyde dehydrogenase family.

The enzyme catalyses acetaldehyde + NAD(+) + CoA = acetyl-CoA + NADH + H(+). This is Acetaldehyde dehydrogenase from Xanthobacter autotrophicus (strain ATCC BAA-1158 / Py2).